The sequence spans 261 residues: Zinc finger protein 664 (261 aa).

9 C2H2-type zinc fingers span residues 3 to 25, 31 to 53, 59 to 81, 87 to 109, 115 to 137, 143 to 165, 171 to 193, 199 to 221, and 227 to 249; these read YKCP…QKIH, HKCD…WRDH, YKCD…KKIH, YKCY…MRVH, YVCS…QRVH, FKCE…QRVH, YKCY…QRVH, YRCC…QRVH, and FKCD…QRVH. Lysine 257 participates in a covalent cross-link: Glycyl lysine isopeptide (Lys-Gly) (interchain with G-Cter in SUMO2).

Belongs to the krueppel C2H2-type zinc-finger protein family.

It localises to the nucleus. May be involved in transcriptional regulation. This chain is Zinc finger protein 664, found in Homo sapiens (Human).